Consider the following 214-residue polypeptide: Charged multivesicular body protein 2b-A (214 aa).

The stretch at 25 to 55 (QRAITRDRTALEKQEKQLEMEIKKMAKAGNK) forms a coiled coil. A disordered region spans residues 178–214 (MAKAPSAAKGLPSASASKSTGISDEEIERQLKALGVD). The MIT-interacting motif motif lies at 202 to 212 (EEIERQLKALG).

Belongs to the SNF7 family. Probable core component of the endosomal sorting required for transport complex III (ESCRT-III). ESCRT-III components are thought to multimerize to form a flat lattice on the perimeter membrane of the endosome.

The protein resides in the cytoplasm. Its subcellular location is the cytosol. The protein localises to the late endosome membrane. Functionally, probable core component of the endosomal sorting required for transport complex III (ESCRT-III) which is involved in multivesicular bodies (MVBs) formation and sorting of endosomal cargo proteins into MVBs. MVBs contain intraluminal vesicles (ILVs) that are generated by invagination and scission from the limiting membrane of the endosome and mostly are delivered to lysosomes enabling degradation of membrane proteins, such as stimulated growth factor receptors, lysosomal enzymes and lipids. The chain is Charged multivesicular body protein 2b-A (chmp2b-a) from Xenopus laevis (African clawed frog).